The sequence spans 201 residues: Molybdenum cofactor guanylyltransferase (201 aa).

GTP contacts are provided by residues 14 to 16 (LAG), Lys31, and Asp104. Position 104 (Asp104) interacts with Mg(2+).

The protein belongs to the MobA family. As to quaternary structure, monomer. Requires Mg(2+) as cofactor.

It localises to the cytoplasm. The catalysed reaction is Mo-molybdopterin + GTP + H(+) = Mo-molybdopterin guanine dinucleotide + diphosphate. Its function is as follows. Transfers a GMP moiety from GTP to Mo-molybdopterin (Mo-MPT) cofactor (Moco or molybdenum cofactor) to form Mo-molybdopterin guanine dinucleotide (Mo-MGD) cofactor. This is Molybdenum cofactor guanylyltransferase from Helicobacter pylori (strain G27).